The chain runs to 155 residues: Deoxyuridine 5'-triphosphate nucleotidohydrolase (155 aa).

Substrate is bound by residues 74-76, Asn87, and 91-93; these read RSG and LID.

The protein belongs to the dUTPase family. The cofactor is Mg(2+).

The enzyme catalyses dUTP + H2O = dUMP + diphosphate + H(+). The protein operates within pyrimidine metabolism; dUMP biosynthesis; dUMP from dCTP (dUTP route): step 2/2. In terms of biological role, this enzyme is involved in nucleotide metabolism: it produces dUMP, the immediate precursor of thymidine nucleotides and it decreases the intracellular concentration of dUTP so that uracil cannot be incorporated into DNA. This is Deoxyuridine 5'-triphosphate nucleotidohydrolase from Xanthomonas axonopodis pv. citri (strain 306).